Reading from the N-terminus, the 197-residue chain is Guanylate kinase (197 aa).

Ser2 bears the N-acetylserine mark. The region spanning 4–186 (PRPVVLSGPS…AYAELKEALS (183 aa)) is the Guanylate kinase-like domain. Residue 14-19 (GAGKST) participates in ATP binding. A substrate-binding site is contributed by 37–51 (SHTTRNPRPGEENGK). Catalysis depends on residues Arg44, Arg137, and Arg148. Arg137 lines the ATP pocket. 171–172 (ND) contributes to the ATP binding site.

The protein belongs to the guanylate kinase family. As to quaternary structure, monomer. Interacts with RD3. In terms of tissue distribution, widely expressed.

The protein localises to the photoreceptor inner segment. It localises to the cytoplasm. Its subcellular location is the cytosol. It is found in the mitochondrion. The enzyme catalyses GMP + ATP = GDP + ADP. Up-regulated by RD3. Its function is as follows. Catalyzes the phosphorylation of GMP to GDP. Essential enzyme for recycling GMP and indirectly, cyclic GMP (cGMP). Involved in the cGMP metabolism in photoreceptors. It may also have a role in the survival and growth progression of some tumors. In addition to its physiological role, GUK1 is essential for converting prodrugs used for the treatment of cancers and viral infections into their pharmacologically active metabolites, most notably acyclovir, ganciclovir, and 6-thioguanine and its closely related analog 6-mercaptopurine. The polypeptide is Guanylate kinase (Homo sapiens (Human)).